A 291-amino-acid chain; its full sequence is Small ribosomal subunit protein uS2 (291 aa).

The tract at residues Asn-231–Lys-291 is disordered. Basic and acidic residues predominate over residues Glu-246–Glu-259. Low complexity predominate over residues Ala-260–Ala-285.

This sequence belongs to the universal ribosomal protein uS2 family.

This Pseudarthrobacter chlorophenolicus (strain ATCC 700700 / DSM 12829 / CIP 107037 / JCM 12360 / KCTC 9906 / NCIMB 13794 / A6) (Arthrobacter chlorophenolicus) protein is Small ribosomal subunit protein uS2.